The chain runs to 112 residues: 2Fe-2S ferredoxin (112 aa).

The 2Fe-2S ferredoxin-type domain occupies 5 to 107; sequence IKVTFIVNDG…GIKVRLPSAT (103 aa). Residues Cys-42, Cys-48, Cys-51, and Cys-88 each coordinate [2Fe-2S] cluster.

The protein belongs to the adrenodoxin/putidaredoxin family. The cofactor is [2Fe-2S] cluster.

Ferredoxin are iron-sulfur proteins that transfer electrons in a wide variety of metabolic reactions. The chain is 2Fe-2S ferredoxin (fdxB) from Rickettsia felis (strain ATCC VR-1525 / URRWXCal2) (Rickettsia azadi).